Reading from the N-terminus, the 40-residue chain is MKVRNSLRSLKNKPGAQVVRRRGKVYVINKKEPRFKARQG.

It belongs to the bacterial ribosomal protein bL36 family.

In Corynebacterium glutamicum (strain R), this protein is Large ribosomal subunit protein bL36.